Reading from the N-terminus, the 697-residue chain is DNA ligase (697 aa).

Residues 36–40 (DAEYD), 85–86 (SL), and Glu123 each bind NAD(+). Lys125 functions as the N6-AMP-lysine intermediate in the catalytic mechanism. NAD(+) is bound by residues Arg146, Glu182, Lys320, and Lys344. Zn(2+) contacts are provided by Cys438, Cys441, Cys456, and Cys462. One can recognise a BRCT domain in the interval 619–697 (PQGNTLAGKT…EDGLKALLGV (79 aa)).

This sequence belongs to the NAD-dependent DNA ligase family. LigA subfamily. Requires Mg(2+) as cofactor. Mn(2+) is required as a cofactor.

The catalysed reaction is NAD(+) + (deoxyribonucleotide)n-3'-hydroxyl + 5'-phospho-(deoxyribonucleotide)m = (deoxyribonucleotide)n+m + AMP + beta-nicotinamide D-nucleotide.. DNA ligase that catalyzes the formation of phosphodiester linkages between 5'-phosphoryl and 3'-hydroxyl groups in double-stranded DNA using NAD as a coenzyme and as the energy source for the reaction. It is essential for DNA replication and repair of damaged DNA. The chain is DNA ligase from Bordetella petrii (strain ATCC BAA-461 / DSM 12804 / CCUG 43448).